We begin with the raw amino-acid sequence, 1037 residues long: Sentrin-specific protease 7 (1037 aa).

Positions 1-10 (MDRARPGRRR) are enriched in basic residues. Disordered regions lie at residues 1 to 27 (MDRARPGRRRASSEIVTEGKRKKSSPA) and 185 to 399 (SDTA…ENSS). Phosphoserine occurs at positions 12, 13, and 25. Over residues 192-208 (SEQLSSSSDGSLESCQS) the composition is skewed to low complexity. Residues 272-282 (GTSNKNTSYSY) are compositionally biased toward polar residues. Residues 290–300 (VSRKRKKRGRS) show a composition bias toward basic residues. Basic and acidic residues-rich tracts occupy residues 301–321 (NFHDSHNSKTSLDKPTEHTKE) and 328–341 (VSRKLEESGEDSHQ). A compositionally biased stretch (low complexity) spans 379-399 (ASSPNKSLESSASSEVSENSS). Phosphoserine occurs at positions 434 and 435. Residues 747-1037 (LGVTNEDLEC…HLQQQKGGSC (291 aa)) are protease. Histidine 847 is an active-site residue. The interval 873 to 909 (QFQGQQSQHDHKMTDNDPHTTSTVSTSAEDSQSTEVN) is disordered. Over residues 880–890 (QHDHKMTDNDP) the composition is skewed to basic and acidic residues. The segment covering 891-909 (HTTSTVSTSAEDSQSTEVN) has biased composition (polar residues). Residue aspartate 926 is part of the active site. Cysteine 979 acts as the Nucleophile in catalysis.

This sequence belongs to the peptidase C48 family.

Its subcellular location is the cytoplasm. Protease that acts as a positive regulator of the cGAS-STING pathway by catalyzing desumoylation of CGAS. Desumoylation of CGAS promotes DNA-binding activity of CGAS, subsequent oligomerization and activation. Deconjugates SUMO2 and SUMO3 from targeted proteins, but not SUMO1. Catalyzes the deconjugation of poly-SUMO2 and poly-SUMO3 chains. Has very low efficiency in processing full-length SUMO proteins to their mature forms. The protein is Sentrin-specific protease 7 of Mus musculus (Mouse).